Reading from the N-terminus, the 422-residue chain is Receptor homology region, transmembrane domain- and RING domain-containing protein 3 (422 aa).

The signal sequence occupies residues 1 to 22 (MNLVVLLILTLLLFIVSYVVDA). The Lumenal segment spans residues 23–168 (GQVILVDSNI…NTEDSVWSLY (146 aa)). Asn31 carries N-linked (GlcNAc...) asparagine glycosylation. Residues Cys64 and Cys89 are joined by a disulfide bond. In terms of domain architecture, PA spans 81 to 146 (LVLIIRGGCS…RAGEMLKKYA (66 aa)). The helical transmembrane segment at 169–189 (ASIALILSLAIFCVMVTCVFF) threads the bilayer. Over 190 to 422 (YRYCSTIRNS…HFASAHSLPD (233 aa)) the chain is Cytoplasmic. The segment at 232 to 274 (CAICLEDYIVGDKLRVLPCSHKFHVACVDSWLISWRTFCPVCK) adopts an RING-type; atypical zinc-finger fold. The disordered stretch occupies residues 344 to 368 (LRRQASPLQSSSQRSHLSMKSSHSL). A compositionally biased stretch (polar residues) spans 349 to 368 (SPLQSSSQRSHLSMKSSHSL).

It is found in the prevacuolar compartment membrane. The protein localises to the protein storage vacuole membrane. In terms of biological role, involved in the trafficking of vacuolar proteins. May function as a sorting receptor for protein trafficking to the protein storage vacuole (PSV). In Arabidopsis thaliana (Mouse-ear cress), this protein is Receptor homology region, transmembrane domain- and RING domain-containing protein 3 (RMR3).